Consider the following 114-residue polypeptide: Astacin-like metalloprotease toxin 4 (114 aa).

The region spanning 1–114 is the Peptidase M12A domain; sequence RETNENDYVD…GLLCLFKGSV (114 aa). Residues Cys17 and Cys38 are joined by a disulfide bond. His46 is a binding site for Zn(2+). Residue Glu47 is part of the active site. Residues His50 and His56 each contribute to the Zn(2+) site. Asn88 is a glycosylation site (N-linked (GlcNAc...) asparagine).

Monomer. Zn(2+) serves as cofactor. As to expression, expressed by the venom gland.

Its subcellular location is the secreted. Inhibited by 1,10-phenanthroline. Its function is as follows. Zinc metalloprotease. Provoques deadhesion of endothelial cells from cell cultures, and also degradation of fibronectin, fibrinogen and gelatin in vitro. Its role in the venom is not fully understood but it might act as a spreading factor that facilitates diffusion of other venom toxins. Alternatively, it might be involved in the proteolytic processing of other venom toxins or it might play a role in extra-oral digestion of prey. This chain is Astacin-like metalloprotease toxin 4, found in Loxosceles laeta (South American recluse spider).